Here is a 124-residue protein sequence, read N- to C-terminus: Urease subunit beta (124 aa).

It belongs to the urease beta subunit family. In terms of assembly, heterotrimer of UreA (gamma), UreB (beta) and UreC (alpha) subunits. Three heterotrimers associate to form the active enzyme.

Its subcellular location is the cytoplasm. The enzyme catalyses urea + 2 H2O + H(+) = hydrogencarbonate + 2 NH4(+). Its pathway is nitrogen metabolism; urea degradation; CO(2) and NH(3) from urea (urease route): step 1/1. This Ureaplasma urealyticum serovar 10 (strain ATCC 33699 / Western) protein is Urease subunit beta.